We begin with the raw amino-acid sequence, 231 residues long: Proteasome subunit alpha type-2 (231 aa).

This sequence belongs to the peptidase T1A family. In terms of assembly, the 26S proteasome consists of a 20S proteasome core and two 19S regulatory subunits. The 20S proteasome core is composed of 28 subunits that are arranged in four stacked rings, resulting in a barrel-shaped structure. The two end rings are each formed by seven alpha subunits, and the two central rings are each formed by seven beta subunits. The catalytic chamber with the active sites is on the inside of the barrel.

The protein localises to the cytoplasm. Its subcellular location is the nucleus. The proteasome is a multicatalytic proteinase complex which is characterized by its ability to cleave peptides with Arg, Phe, Tyr, Leu, and Glu adjacent to the leaving group at neutral or slightly basic pH. The proteasome has an ATP-dependent proteolytic activity. This is Proteasome subunit alpha type-2 from Trypanosoma brucei brucei.